Here is a 560-residue protein sequence, read N- to C-terminus: Platelet glycoprotein V (560 aa).

Residues Met-1–Ala-16 form the signal peptide. Residues Gln-17 to Thr-50 enclose the LRRNT domain. Residues Gln-17–Gly-523 lie on the Extracellular side of the membrane. An N-linked (GlcNAc...) asparagine glycan is attached at Asn-51. 13 LRR repeats span residues Val-75 to Asp-96, Lys-99 to Lys-120, Leu-123 to Lys-144, Asn-147 to Asn-168, Asn-171 to Gln-193, Lys-195 to Ser-216, Ala-219 to Arg-240, Asn-243 to His-264, Asn-267 to Glu-288, Gly-291 to Asn-312, Glu-340 to Gly-361, Lys-364 to Asn-385, and Ser-388 to Ala-409. An N-linked (GlcNAc...) (complex) asparagine glycan is attached at Asn-181. N-linked (GlcNAc...) (complex) asparagine glycosylation occurs at Asn-243. Residues Asn-267, Asn-298, and Asn-312 are each glycosylated (N-linked (GlcNAc...) asparagine). Asn-385 carries an N-linked (GlcNAc...) asparagine glycan. In terms of domain architecture, LRRCT spans Asn-421–Gly-474. The segment at Asp-469–Pro-498 is disordered. The N-linked (GlcNAc...) asparagine glycan is linked to Asn-499. The helical transmembrane segment at Phe-524–Ile-544 threads the bilayer. The Cytoplasmic portion of the chain corresponds to Lys-545 to Gly-560.

Post-translationally, the N-terminus is blocked. As to expression, platelets and megakaryocytes.

The protein localises to the membrane. The GPIb-V-IX complex functions as the vWF receptor and mediates vWF-dependent platelet adhesion to blood vessels. The adhesion of platelets to injured vascular surfaces in the arterial circulation is a critical initiating event in hemostasis. The sequence is that of Platelet glycoprotein V (GP5) from Homo sapiens (Human).